The sequence spans 775 residues: N6-adenosine-methyltransferase non-catalytic subunit MTB (775 aa).

Basic and acidic residues predominate over residues 1-10 (MKKKQEESSL). 2 disordered regions span residues 1-424 (MKKK…GAIP) and 520-569 (DRGG…EQND). Residues 40–49 (FESSSRSGGS) are compositionally biased toward low complexity. 5 stretches are compositionally biased toward basic and acidic residues: residues 50-79 (KSKE…ERTH), 100-117 (DGDH…DSGG), 125-222 (EHGE…LKDN), 229-278 (SSGD…RGEA), and 333-344 (EWAHNQEGRQRS). Residues 375 to 400 (QRGSTPGRTNFVQTPNRGYQTPQGTR) show a composition bias toward polar residues.

This sequence belongs to the MT-A70-like family. In terms of assembly, forms homodimers. Interacts with HAKAI, MTA and VIR. Associates with MTA, FIP37, VIR and HAKAI to form the m6A writer complex which is essential for adenosine methylation at specific mRNA sequences.

The protein localises to the nucleus speckle. Its subcellular location is the nucleus. It localises to the nucleoplasm. Functionally, probable non-catalytic subunit of the N6-methyltransferase complex, a multiprotein complex that mediates N6-methyladenosine (m6A) methylation at the 5'-[AG]GAC-3' consensus sites of some mRNAs. Associates with MTA, FIP37, VIR and HAKAI to form the m6A writer complex which is essential for adenosine methylation at specific mRNA sequences. N6-methyladenosine (m6A) plays a role in mRNA stability, processing, translation efficiency and editing. This chain is N6-adenosine-methyltransferase non-catalytic subunit MTB, found in Arabidopsis thaliana (Mouse-ear cress).